Here is a 57-residue protein sequence, read N- to C-terminus: Delta-elapitoxin-Cb1a (57 aa).

4 cysteine pairs are disulfide-bonded: Cys-3–Cys-22, Cys-15–Cys-36, Cys-40–Cys-49, and Cys-50–Cys-55.

This sequence belongs to the three-finger toxin family. Short-chain subfamily. In terms of tissue distribution, expressed by the venom gland.

It localises to the secreted. Its function is as follows. This toxin shifts the voltage-dependence of Nav1.4/SCN4A activation to more hyperpolarised potentials, inhibits inactivation, and produces large ramp currents, consistent with its profound effects on contractile force in an isolated skeletal muscle preparation. This toxin produces large muscle contractions and fasciculations in the indirectly stimulated chick biventer cervicis nerve-muscle assay, which are significantly inhibited by the addition of the sodium channel antagonist tetrodotoxin. The sequence is that of Delta-elapitoxin-Cb1a from Calliophis bivirgatus (Blue Malaysian coral snake).